A 119-amino-acid polypeptide reads, in one-letter code: Large ribosomal subunit protein uL22 (119 aa).

It belongs to the universal ribosomal protein uL22 family. As to quaternary structure, part of the 50S ribosomal subunit.

Functionally, this protein binds specifically to 23S rRNA; its binding is stimulated by other ribosomal proteins, e.g. L4, L17, and L20. It is important during the early stages of 50S assembly. It makes multiple contacts with different domains of the 23S rRNA in the assembled 50S subunit and ribosome. In terms of biological role, the globular domain of the protein is located near the polypeptide exit tunnel on the outside of the subunit, while an extended beta-hairpin is found that lines the wall of the exit tunnel in the center of the 70S ribosome. In Rhodopirellula baltica (strain DSM 10527 / NCIMB 13988 / SH1), this protein is Large ribosomal subunit protein uL22.